Here is a 334-residue protein sequence, read N- to C-terminus: Hemin transport system permease protein HmuU (334 aa).

9 helical membrane-spanning segments follow: residues 9–29 (LMLG…ANMG), 60–80 (LLAV…QGLF), 96–116 (AALC…LLAL), 117–137 (YSHM…IFTL), 149–169 (LLAG…LTYI), 191–211 (WSTL…GLLQ), 244–264 (AILI…GLVV), 278–298 (WLLP…DTLA), and 306–326 (EMPV…WLIL).

This sequence belongs to the binding-protein-dependent transport system permease family. FecCD subfamily.

Its subcellular location is the cell inner membrane. Functionally, part of the binding-protein-dependent transport system for hemin; probably responsible for the translocation of the substrate across the membrane. The polypeptide is Hemin transport system permease protein HmuU (hmuU) (Yersinia pestis).